The chain runs to 339 residues: mRNA cap guanine-N(7) methyltransferase 2 (339 aa).

An mRNA cap 0 methyltransferase domain is found at 1–277 (MAVTPHHRLY…LYSTFVFQKP (277 aa)). S-adenosyl-L-methionine is bound by residues Lys14, Asp54, and 82-83 (DP). Residues 314–339 (VSRTDILPPADNEKGILGPGPADMRL) are disordered.

The protein belongs to the class I-like SAM-binding methyltransferase superfamily. mRNA cap 0 methyltransferase family.

It is found in the nucleus. The catalysed reaction is a 5'-end (5'-triphosphoguanosine)-ribonucleoside in mRNA + S-adenosyl-L-methionine = a 5'-end (N(7)-methyl 5'-triphosphoguanosine)-ribonucleoside in mRNA + S-adenosyl-L-homocysteine. Functionally, mRNA-capping methyltransferase that methylates the N7 position of the added guanosine to the 5'-cap structure of mRNAs. Binds RNA containing 5'-terminal GpppC. The polypeptide is mRNA cap guanine-N(7) methyltransferase 2 (Oryza sativa subsp. japonica (Rice)).